We begin with the raw amino-acid sequence, 740 residues long: ATP-dependent RNA helicase DDX1 (740 aa).

Residues 1-295 (MAAFSEMGVM…APKALIVEPS (295 aa)) are necessary for interaction with HNRNPK. An interaction with dsRNA region spans residues 1–448 (MAAFSEMGVM…DTVHHVVVPV (448 aa)). The segment at 1–525 (MAAFSEMGVM…KIDCDNLEQY (525 aa)) is necessary for interaction with RELA. The Helicase ATP-binding domain occupies 2-428 (AAFSEMGVMP…SEKIMHFPTW (427 aa)). Residue 46–53 (AETGSGKT) coordinates ATP. The B30.2/SPRY domain occupies 70–247 (DQQEGKKGKA…LKFNFGEEEF (178 aa)). N6-acetyllysine occurs at positions 239 and 268. Position 281 is an N6-acetyllysine; alternate (K281). A Glycyl lysine isopeptide (Lys-Gly) (interchain with G-Cter in SUMO2); alternate cross-link involves residue K281. The DEAD box motif lies at 370 to 373 (DEAD). A Phosphoserine modification is found at S481. The region spanning 493 to 681 (KGEYAVRAIK…QVEPDIKVPV (189 aa)) is the Helicase C-terminal domain. Positions 525-740 (YFMQQGGGPD…YLPNQLFRTF (216 aa)) are necessary for interaction with HNRNPK.

Belongs to the DEAD box helicase family. DDX1 subfamily. Found in a multi-helicase-TICAM1 complex at least composed of DHX36, DDX1, DDX21 and TICAM1; this complex exists in resting cells with or without poly(I:C) RNA ligand stimulation. Interacts with DHX36. Interacts (via B30.2/SPRY domain) with DDX21 (via N-terminus); this interaction serves as bridges to TICAM1. Interacts with FAM98A (via N- and C-terminus). Interacts with PHF5A (via C-terminus). Interacts with MBNL1. Interacts with CSTF2. Interacts with HNRNPK. Interacts with ATM. Interacts with RELA (via C-terminus). Component of the tRNA-splicing ligase complex. Interacts with PQBP1. Interacts with ERCC6. In terms of processing, phosphorylated by ATM kinase; phosphorylation is increased in response to ionizing radiation (IR).

Its subcellular location is the nucleus. It localises to the cytoplasm. The protein resides in the cytoplasmic granule. It is found in the cytosol. The protein localises to the mitochondrion. The catalysed reaction is ATP + H2O = ADP + phosphate + H(+). Acts as an ATP-dependent RNA helicase, able to unwind both RNA-RNA and RNA-DNA duplexes. Possesses 5' single-stranded RNA overhang nuclease activity. Possesses ATPase activity on various RNA, but not DNA polynucleotides. May play a role in RNA clearance at DNA double-strand breaks (DSBs), thereby facilitating the template-guided repair of transcriptionally active regions of the genome. Together with RELA, acts as a coactivator to enhance NF-kappa-B-mediated transcriptional activation. Acts as a positive transcriptional regulator of cyclin CCND2 expression. Binds to the cyclin CCND2 promoter region. Associates with chromatin at the NF-kappa-B promoter region via association with RELA. Binds to poly(A) RNA. May be involved in 3'-end cleavage and polyadenylation of pre-mRNAs. Component of the tRNA-splicing ligase complex required to facilitate the enzymatic turnover of catalytic subunit RTCB: together with archease (ZBTB8OS), acts by facilitating the guanylylation of RTCB, a key intermediate step in tRNA ligation. Component of a multi-helicase-TICAM1 complex that acts as a cytoplasmic sensor of viral double-stranded RNA (dsRNA) and plays a role in the activation of a cascade of antiviral responses including the induction of pro-inflammatory cytokines via the adapter molecule TICAM1. Specifically binds (via helicase ATP-binding domain) on both short and long poly(I:C) dsRNA. The polypeptide is ATP-dependent RNA helicase DDX1 (DDX1) (Bos taurus (Bovine)).